Consider the following 254-residue polypeptide: Mannose-binding protein (254 aa).

Residues 1 to 19 form the signal peptide; it reads MTLLQPFSALLLCLSLMMA. The tract at residues 46-99 is disordered; it reads NGLPGRDGRDGPKGEKGDPGEGLRGLQGLPGKAGPQGLKGEVGPQGEKGQKGER. Residues 51–66 are compositionally biased toward basic and acidic residues; that stretch reads RDGRDGPKGEKGDPGE. The residue at position 57 (proline 57) is a 4-hydroxyproline. A 5-hydroxylysine mark is found at lysine 58 and lysine 61. Lysine 58 and lysine 61 each carry an O-linked (Gal...) hydroxylysine glycan. Proline 75 carries the post-translational modification 4-hydroxyproline. Residues lysine 93 and lysine 96 each carry the 5-hydroxylysine modification. The 111-residue stretch at 140 to 250 folds into the C-type lectin domain; the sequence is VGKKMFVSTG…LDCSNSNIFI (111 aa). 2 disulfides stabilise this stretch: cysteine 161/cysteine 252 and cysteine 229/cysteine 243.

As to quaternary structure, oligomeric complex of 3 or more homotrimers.

Its subcellular location is the secreted. In terms of biological role, calcium-dependent lectin involved in innate immune defense. Binds mannose, fucose and N-acetylglucosamine on different microorganisms and activates the lectin complement pathway. The chain is Mannose-binding protein from Gallus gallus (Chicken).